The primary structure comprises 330 residues: Virulence plasmid integrase pGP8-D (330 aa).

The region spanning 39-124 (FSLFEVIMHW…SYISLTRFLN (86 aa)) is the Core-binding (CB) domain. Residues 152-327 (VKTDAMNSLQ…SREDNASKKM (176 aa)) form the Tyr recombinase domain. Residues Arg-189, Lys-214, His-279, Arg-282, and His-305 contribute to the active site. The active-site O-(3'-phospho-DNA)-tyrosine intermediate is Tyr-314.

The protein belongs to the 'phage' integrase family.

This Chlamydia trachomatis serovar L2 (strain ATCC VR-902B / DSM 19102 / 434/Bu) protein is Virulence plasmid integrase pGP8-D.